The primary structure comprises 367 residues: Uroporphyrinogen decarboxylase (367 aa).

M1 carries the post-translational modification N-acetylmethionine. Residues R37, A39, R41, R50, D86, Y164, S219, and H339 each contribute to the coproporphyrinogen I site. R37, A39, and R41 together coordinate coproporphyrinogen III. The coproporphyrinogen III site is built by D86, Y164, S219, and H339.

Belongs to the uroporphyrinogen decarboxylase family. Homodimer.

It is found in the cytoplasm. The protein localises to the cytosol. The enzyme catalyses uroporphyrinogen III + 4 H(+) = coproporphyrinogen III + 4 CO2. It catalyses the reaction uroporphyrinogen I + 4 H(+) = coproporphyrinogen I + 4 CO2. It participates in porphyrin-containing compound metabolism; protoporphyrin-IX biosynthesis; coproporphyrinogen-III from 5-aminolevulinate: step 4/4. Its function is as follows. Catalyzes the sequential decarboxylation of the four acetate side chains of uroporphyrinogen to form coproporphyrinogen and participates in the fifth step in the heme biosynthetic pathway. Isomer I or isomer III of uroporphyrinogen may serve as substrate, but only coproporphyrinogen III can ultimately be converted to heme. In vitro also decarboxylates pentacarboxylate porphyrinogen I. This Mus musculus (Mouse) protein is Uroporphyrinogen decarboxylase.